The chain runs to 358 residues: Nicotinate-nucleotide--dimethylbenzimidazole phosphoribosyltransferase (358 aa).

Catalysis depends on E314, which acts as the Proton acceptor.

Belongs to the CobT family.

It carries out the reaction 5,6-dimethylbenzimidazole + nicotinate beta-D-ribonucleotide = alpha-ribazole 5'-phosphate + nicotinate + H(+). Its pathway is nucleoside biosynthesis; alpha-ribazole biosynthesis; alpha-ribazole from 5,6-dimethylbenzimidazole: step 1/2. Catalyzes the synthesis of alpha-ribazole-5'-phosphate from nicotinate mononucleotide (NAMN) and 5,6-dimethylbenzimidazole (DMB). This Mycobacterium ulcerans (strain Agy99) protein is Nicotinate-nucleotide--dimethylbenzimidazole phosphoribosyltransferase.